We begin with the raw amino-acid sequence, 285 residues long: Acetylglutamate kinase (285 aa).

Residues 64 to 65, arginine 86, and asparagine 179 contribute to the substrate site; that span reads GG.

It belongs to the acetylglutamate kinase family. ArgB subfamily.

The protein resides in the plastid. The protein localises to the chloroplast. It carries out the reaction N-acetyl-L-glutamate + ATP = N-acetyl-L-glutamyl 5-phosphate + ADP. It participates in amino-acid biosynthesis; L-arginine biosynthesis; N(2)-acetyl-L-ornithine from L-glutamate: step 2/4. Catalyzes the ATP-dependent phosphorylation of N-acetyl-L-glutamate. This chain is Acetylglutamate kinase, found in Pyropia yezoensis (Susabi-nori).